Here is a 110-residue protein sequence, read N- to C-terminus: Large ribosomal subunit protein uL22 (110 aa).

The protein belongs to the universal ribosomal protein uL22 family. In terms of assembly, part of the 50S ribosomal subunit.

Functionally, this protein binds specifically to 23S rRNA; its binding is stimulated by other ribosomal proteins, e.g. L4, L17, and L20. It is important during the early stages of 50S assembly. It makes multiple contacts with different domains of the 23S rRNA in the assembled 50S subunit and ribosome. Its function is as follows. The globular domain of the protein is located near the polypeptide exit tunnel on the outside of the subunit, while an extended beta-hairpin is found that lines the wall of the exit tunnel in the center of the 70S ribosome. In Leptospira borgpetersenii serovar Hardjo-bovis (strain JB197), this protein is Large ribosomal subunit protein uL22.